Reading from the N-terminus, the 467-residue chain is Receptor-like cytosolic serine/threonine-protein kinase RBK1 (467 aa).

Positions 1–24 are enriched in basic and acidic residues; sequence MAVEDNKNSESKNHQEVELHRNDL. Residues 1-73 form a disordered region; it reads MAVEDNKNSE…PFSNTTKTVS (73 aa). Residues 40 to 71 show a composition bias toward low complexity; the sequence is SDSDNSSSSCSSCSSDDKSSSTSSPFSNTTKT. Thr-142 carries the post-translational modification Phosphothreonine. One can recognise a Protein kinase domain in the interval 153 to 430; that stretch reads FNPENMIGKG…LRGEDGPAEL (278 aa). Residues 159–167 and Lys-181 contribute to the ATP site; that span reads IGKGGHAEV. Asp-278 (proton acceptor) is an active-site residue. Ser-282 carries the post-translational modification Phosphoserine. Thr-318 is modified (phosphothreonine). Tyr-326 bears the Phosphotyrosine mark.

Belongs to the protein kinase superfamily. Ser/Thr protein kinase family. In terms of assembly, interacts with ARAC5 and ARAC10. In terms of tissue distribution, mostly expressed in vasculature, hydathode endothem, leaf mesophyll cells and trichomes.

The protein resides in the cytoplasm. It localises to the endomembrane system. Its subcellular location is the nucleus. It catalyses the reaction L-seryl-[protein] + ATP = O-phospho-L-seryl-[protein] + ADP + H(+). The enzyme catalyses L-threonyl-[protein] + ATP = O-phospho-L-threonyl-[protein] + ADP + H(+). The chain is Receptor-like cytosolic serine/threonine-protein kinase RBK1 (RBK1) from Arabidopsis thaliana (Mouse-ear cress).